Consider the following 202-residue polypeptide: Complement component C8 gamma chain (202 aa).

Positions 1-20 (MLPPGTATLLTLLLAAGSLG) are cleaved as a signal peptide. Q21 carries the pyrrolidone carboxylic acid modification. Cysteines 96 and 188 form a disulfide.

The protein belongs to the calycin superfamily. Lipocalin family. Heterotrimer of 3 chains: alpha (C8A), beta (C8B) and gamma (C8G); the alpha and gamma chains are disulfide bonded. Component of the membrane attack complex (MAC), composed of complement C5b, C6, C7, C8A, C8B, C8G and multiple copies of the pore-forming subunit C9.

It localises to the secreted. The protein localises to the target cell membrane. Membrane attack complex (MAC) assembly is inhibited by CD59, thereby protecting self-cells from damage during complement activation. MAC assembly is also inhibited by clusterin (CLU) chaperones that inhibit polymerization of C9. In terms of biological role, component of the membrane attack complex (MAC), a multiprotein complex activated by the complement cascade, which inserts into a target cell membrane and forms a pore, leading to target cell membrane rupture and cell lysis. The MAC is initiated by proteolytic cleavage of C5 into complement C5b in response to the classical, alternative, lectin and GZMK complement pathways. The complement pathways consist in a cascade of proteins that leads to phagocytosis and breakdown of pathogens and signaling that strengthens the adaptive immune system. C8G, together with C8A and C8B, inserts into the target membrane, but does not form pores by itself. During MAC assembly, associates with C5b, C6 and C7 to form the C5b8 intermediate complex that inserts into the target membrane and traverses the bilayer increasing membrane rigidity. The sequence is that of Complement component C8 gamma chain from Homo sapiens (Human).